Consider the following 234-residue polypeptide: Potassium/proton antiporter CemA (234 aa).

The next 4 helical transmembrane spans lie at 8–28, 117–137, 157–177, and 193–213; these read IPLR…WIPL, TICF…LFIL, ILFV…ELLI, and IILS…FKYW.

This sequence belongs to the CemA family.

It is found in the plastid. It localises to the chloroplast inner membrane. It carries out the reaction K(+)(in) + H(+)(out) = K(+)(out) + H(+)(in). Its function is as follows. Contributes to K(+)/H(+) antiport activity by supporting proton efflux to control proton extrusion and homeostasis in chloroplasts in a light-dependent manner to modulate photosynthesis. Prevents excessive induction of non-photochemical quenching (NPQ) under continuous-light conditions. Indirectly promotes efficient inorganic carbon uptake into chloroplasts. This chain is Potassium/proton antiporter CemA, found in Citrus sinensis (Sweet orange).